The chain runs to 331 residues: Protein RecA (331 aa).

G66 to T73 serves as a coordination point for ATP.

The protein belongs to the RecA family.

The protein resides in the cytoplasm. Its function is as follows. Can catalyze the hydrolysis of ATP in the presence of single-stranded DNA, the ATP-dependent uptake of single-stranded DNA by duplex DNA, and the ATP-dependent hybridization of homologous single-stranded DNAs. It interacts with LexA causing its activation and leading to its autocatalytic cleavage. The chain is Protein RecA from Lactobacillus delbrueckii subsp. bulgaricus (strain ATCC 11842 / DSM 20081 / BCRC 10696 / JCM 1002 / NBRC 13953 / NCIMB 11778 / NCTC 12712 / WDCM 00102 / Lb 14).